The primary structure comprises 445 residues: tRNA-2-methylthio-N(6)-dimethylallyladenosine synthase (445 aa).

One can recognise an MTTase N-terminal domain in the interval 3-124 (KKLYIKTYGC…LPELISKVVR (122 aa)). [4Fe-4S] cluster is bound by residues cysteine 12, cysteine 48, cysteine 87, cysteine 162, cysteine 166, and cysteine 169. Residues 148–380 (YPQGASSFIS…QQELTAQQLA (233 aa)) enclose the Radical SAM core domain. The 63-residue stretch at 383–445 (ESCVGSIMKV…ASNSLTGEVI (63 aa)) folds into the TRAM domain.

This sequence belongs to the methylthiotransferase family. MiaB subfamily. As to quaternary structure, monomer. It depends on [4Fe-4S] cluster as a cofactor.

It is found in the cytoplasm. The catalysed reaction is N(6)-dimethylallyladenosine(37) in tRNA + (sulfur carrier)-SH + AH2 + 2 S-adenosyl-L-methionine = 2-methylsulfanyl-N(6)-dimethylallyladenosine(37) in tRNA + (sulfur carrier)-H + 5'-deoxyadenosine + L-methionine + A + S-adenosyl-L-homocysteine + 2 H(+). In terms of biological role, catalyzes the methylthiolation of N6-(dimethylallyl)adenosine (i(6)A), leading to the formation of 2-methylthio-N6-(dimethylallyl)adenosine (ms(2)i(6)A) at position 37 in tRNAs that read codons beginning with uridine. The protein is tRNA-2-methylthio-N(6)-dimethylallyladenosine synthase of Rickettsia felis (strain ATCC VR-1525 / URRWXCal2) (Rickettsia azadi).